Here is a 361-residue protein sequence, read N- to C-terminus: Mitogen-activated protein kinase 14 (361 aa).

Positions 25–309 (YQNLTPVGSG…AAEALAHSYF (285 aa)) constitute a Protein kinase domain. ATP-binding positions include 31–39 (VGSGAYGSV) and Lys54. Asp151 serves as the catalytic Proton acceptor. A Phosphothreonine modification is found at Thr181. The TXY signature appears at 181 to 183 (TGY). Position 183 is a phosphotyrosine (Tyr183).

It belongs to the protein kinase superfamily. CMGC Ser/Thr protein kinase family. MAP kinase subfamily. Mg(2+) is required as a cofactor. Post-translationally, dually phosphorylated on Thr-181 and Tyr-183, which activates the enzyme.

The enzyme catalyses L-seryl-[protein] + ATP = O-phospho-L-seryl-[protein] + ADP + H(+). It carries out the reaction L-threonyl-[protein] + ATP = O-phospho-L-threonyl-[protein] + ADP + H(+). With respect to regulation, activated by tyrosine and threonine phosphorylation. Functionally, serine/threonine kinase which acts as an essential component of the MAP kinase signal transduction pathway. mapk14a is one of the four p38 MAPKs which play an important role in the cascades of cellular responses evoked by extracellular stimuli such as pro-inflammatory cytokines or physical stress leading to direct activation of transcription factors. Accordingly, p38 MAPKs phosphorylate a broad range of proteins and it has been estimated that they may have approximately 200 to 300 substrates each. Some of the targets are downstream kinases which are activated through phosphorylation and further phosphorylate additional targets. MPK2 is activated by upstream MAPKK/MAPKKK and stimulates MAPKAP kinase 2 to phosphorylate small heat shock proteins. Does not phosphorylate myelin basic protein or MAPKAP kinase 1. In Xenopus laevis (African clawed frog), this protein is Mitogen-activated protein kinase 14 (mapk14).